The primary structure comprises 203 residues: Glutathione S-transferase (203 aa).

A GST N-terminal domain is found at 2-79 (PDYKVYYFNV…YLANQVGLAG (78 aa)). Glutathione-binding positions include Tyr8, Trp39, Lys43, 49–51 (GQM), and 63–64 (QS). The GST C-terminal domain maps to 81–203 (DDWENLMIDT…YIAKRPITEV (123 aa)).

Belongs to the GST superfamily. Sigma family. In terms of assembly, homodimer.

It carries out the reaction RX + glutathione = an S-substituted glutathione + a halide anion + H(+). Its function is as follows. Conjugation of reduced glutathione to a wide number of exogenous and endogenous hydrophobic electrophiles. The chain is Glutathione S-transferase (GstS1) from Anopheles gambiae (African malaria mosquito).